The chain runs to 295 residues: bZIP transcription factor RISBZ5 (295 aa).

The span at 16-26 (REEAGAGDRKP) shows a compositional bias: basic and acidic residues. Residues 16 to 157 (REEAGAGDRK…ARRSRRRKQA (142 aa)) are disordered. Acidic residues predominate over residues 109–119 (SDSDSDCDSLL). Residues 120 to 136 (EAERSPRLRGTKSTETK) show a composition bias toward basic and acidic residues. Positions 134–197 (ETKRIRRMVS…NTAVTDNRIL (64 aa)) constitute a bZIP domain. A basic motif region spans residues 136–155 (KRIRRMVSNRESARRSRRRK). The leucine-zipper stretch occupies residues 162–176 (LESQVEQLKGENSSL).

As to quaternary structure, homodimer.

Its subcellular location is the nucleus. In terms of biological role, probable transcription factor that binds to the DNA specific sequence 5'-TGAGTCA-3' found in seed storage protein gene promoters. May function as a negative regulator in cold and drought stress responses. This Oryza sativa subsp. japonica (Rice) protein is bZIP transcription factor RISBZ5.